The primary structure comprises 140 residues: Lymphocyte antigen 6H (140 aa).

The first 25 residues, 1 to 25 (MLPAAMKGLGLVLLAALLCSSPAHG), serve as a signal peptide directing secretion. The region spanning 26–91 (LWCQDCTLTT…RHFFSDYLMG (66 aa)) is the UPAR/Ly6 domain. Disulfide bonds link Cys28/Cys52, Cys31/Cys40, Cys45/Cys73, Cys77/Cys104, and Cys105/Cys110. Asn36 carries an N-linked (GlcNAc...) asparagine glycan.

Its subcellular location is the cell membrane. The polypeptide is Lymphocyte antigen 6H (LY6H) (Bos taurus (Bovine)).